The chain runs to 283 residues: Shikimate kinase (283 aa).

Residue 86–96 coordinates ATP; that stretch reads PIKSGLSSSSA.

It belongs to the GHMP kinase family. Archaeal shikimate kinase subfamily.

It is found in the cytoplasm. The catalysed reaction is shikimate + ATP = 3-phosphoshikimate + ADP + H(+). The protein operates within metabolic intermediate biosynthesis; chorismate biosynthesis; chorismate from D-erythrose 4-phosphate and phosphoenolpyruvate: step 5/7. This is Shikimate kinase from Methanococcus maripaludis (strain C6 / ATCC BAA-1332).